A 342-amino-acid polypeptide reads, in one-letter code: SWR1-complex protein 5 (342 aa).

Disordered regions lie at residues 1 to 126 (MAPT…PVTI), 142 to 178 (PRTS…DPDS), and 214 to 238 (LGEN…RMPR). Acidic residues-rich tracts occupy residues 8 to 20 (LAED…DSDF) and 33 to 43 (ISDDDDEEAGE). A compositionally biased stretch (basic residues) spans 78-87 (GEKRQKKTKT). Residues 260–341 (NLSMASRLQA…RRARMAQAGK (82 aa)) enclose the BCNT-C domain.

Belongs to the SWC5 family. Component of the SWR1 chromatin remodeling complex.

The protein resides in the nucleus. Functionally, component of the SWR1 complex which mediates the ATP-dependent exchange of histone H2A for the H2A variant H2A.Z leading to transcriptional regulation of selected genes by chromatin remodeling. Involved in chromosome stability. The protein is SWR1-complex protein 5 (crc-2) of Neurospora crassa (strain ATCC 24698 / 74-OR23-1A / CBS 708.71 / DSM 1257 / FGSC 987).